Consider the following 323-residue polypeptide: Acetyl-coenzyme A carboxylase carboxyl transferase subunit alpha (323 aa).

Residues 32-293 enclose the CoA carboxyltransferase C-terminal domain; that stretch reads NISEEVAKLQ…RKALAAQLES (262 aa).

The protein belongs to the AccA family. As to quaternary structure, acetyl-CoA carboxylase is a heterohexamer composed of biotin carboxyl carrier protein (AccB), biotin carboxylase (AccC) and two subunits each of ACCase subunit alpha (AccA) and ACCase subunit beta (AccD).

It localises to the cytoplasm. It carries out the reaction N(6)-carboxybiotinyl-L-lysyl-[protein] + acetyl-CoA = N(6)-biotinyl-L-lysyl-[protein] + malonyl-CoA. The protein operates within lipid metabolism; malonyl-CoA biosynthesis; malonyl-CoA from acetyl-CoA: step 1/1. Component of the acetyl coenzyme A carboxylase (ACC) complex. First, biotin carboxylase catalyzes the carboxylation of biotin on its carrier protein (BCCP) and then the CO(2) group is transferred by the carboxyltransferase to acetyl-CoA to form malonyl-CoA. This Alcanivorax borkumensis (strain ATCC 700651 / DSM 11573 / NCIMB 13689 / SK2) protein is Acetyl-coenzyme A carboxylase carboxyl transferase subunit alpha.